The following is a 259-amino-acid chain: Global transcriptional regulator CodY (259 aa).

Residues 1–155 (MTLLEKTRKI…GGTVVGMEIL (155 aa)) are GAF domain. Positions 203–222 (ASKIADRVGITRSVIVNALR) form a DNA-binding region, H-T-H motif.

The protein belongs to the CodY family.

It localises to the cytoplasm. DNA-binding global transcriptional regulator which is involved in the adaptive response to starvation and acts by directly or indirectly controlling the expression of numerous genes in response to nutrient availability. During rapid exponential growth, CodY is highly active and represses genes whose products allow adaptation to nutrient depletion. The chain is Global transcriptional regulator CodY from Listeria monocytogenes serotype 4b (strain CLIP80459).